The chain runs to 230 residues: N-(5'-phosphoribosyl)anthranilate isomerase (230 aa).

This sequence belongs to the TrpF family.

The catalysed reaction is N-(5-phospho-beta-D-ribosyl)anthranilate = 1-(2-carboxyphenylamino)-1-deoxy-D-ribulose 5-phosphate. It functions in the pathway amino-acid biosynthesis; L-tryptophan biosynthesis; L-tryptophan from chorismate: step 3/5. In Trichodesmium erythraeum (strain IMS101), this protein is N-(5'-phosphoribosyl)anthranilate isomerase.